The sequence spans 582 residues: MKSIILFVLSLLLILEKQAAVMGQKGGSKGQLSSGSSRFPHRHRSQHYSGQKDKQHTESKGSFSIQHTYHVDANDHDRTRKSQQYYLNAQHKTTKSKQHLRRRQRLLNYKQKGRGRVKPKRHFHLIVIHRKGGQVHHGTQNPSQDQGNSPSGKGIFRQYSNTEKRLWVHGLSKEQASASGAQKGRTQGGSQSSYVLQTEELVVNKQQLETKNSHQNKGHYQNVVDVREEHSGKLQTSLHPAHQDRLQHGPKDIFTTQDELLVYNKNQHQTKNLNQDQEHGQKAHKISYQSSRTEERQLNHGEKSVQKDVSKGSISIQTEEKIHGKSQNQVTIPSQDQEHGHKENKISYQSSSAEERRLNSGEKGIQKGVXKGSISIQTEEKIYGKSQNQVTIPSQDQEHGHKENKISYQSSSAEERRLNSGEKGIQKGVXKGSISIQTEEKIYGKSQNQVTIPSQDQEHGHKENKISYQSSSTEQRQLNYGRKSIQKDVIQSSLSFQTEKLVEGKSQIQTPNPNQGQWSGQNAKGNSGKSADGEQDLLSHEQEGRYQQEFSGAHNTVNIEHEVAYDDLLTQQYNEDRNPIST.

A signal peptide spans 1–23; that stretch reads MKSIILFVLSLLLILEKQAAVMG. Disordered regions lie at residues 25 to 62, 131 to 156, 173 to 192, 272 to 477, and 502 to 554; these read KGGSKGQLSSGSSRFPHRHRSQHYSGQKDKQHTESKGS, KGGQVHHGTQNPSQDQGNSPSGKGIF, KEQASASGAQKGRTQGGSQS, NLNQ…EQRQ, and VEGK…SGAH. Positions 50-59 are enriched in basic and acidic residues; the sequence is GQKDKQHTES. Composition is skewed to polar residues over residues 137–151 and 174–192; these read HGTQNPSQDQGNSPS and EQASASGAQKGRTQGGSQS. Over residues 292 to 310 the composition is skewed to basic and acidic residues; sequence RTEERQLNHGEKSVQKDVS. Polar residues predominate over residues 325-335; that stretch reads KSQNQVTIPSQ. Residues 336–345 are compositionally biased toward basic and acidic residues; sequence DQEHGHKENK. Positions 385–395 are enriched in polar residues; it reads KSQNQVTIPSQ. A compositionally biased stretch (basic and acidic residues) spans 396–405; the sequence is DQEHGHKENK. Polar residues predominate over residues 445–455; the sequence is KSQNQVTIPSQ. Over residues 456-465 the composition is skewed to basic and acidic residues; it reads DQEHGHKENK. Composition is skewed to polar residues over residues 466 to 477 and 506 to 529; these read ISYQSSSTEQRQ and SQIQTPNPNQGQWSGQNAKGNSGK. Positions 537 to 546 are enriched in basic and acidic residues; it reads LLSHEQEGRY.

The protein belongs to the semenogelin family. As to quaternary structure, interacts with SERPINA5.

It is found in the secreted. Participates in the formation of a gel matrix (sperm coagulum) entrapping the accessory gland secretions and ejaculated spermatozoa. In Macaca nemestrina (Pig-tailed macaque), this protein is Semenogelin-2 (SEMG2).